The following is a 1149-amino-acid chain: Bone sialoprotein-binding protein (1149 aa).

The N-terminal stretch at 1–52 is a signal peptide; it reads MINRDNKKAITKKGMISNRLNKFSIRKYTVGTASILVGTTLIFGLGNQEAKA. The segment at 53 to 601 is ligand binding A region; that stretch reads AENTSTENAK…GDGTVKPEEK (549 aa). 2 disordered regions span residues 54 to 249 and 675 to 697; these read ENTS…TAPT and LPTK…VTVK. Over residues 61–75 the composition is skewed to basic and acidic residues; the sequence is AKQDEASASDNKEVV. A compositionally biased stretch (polar residues) spans 77 to 89; it reads ETENNSTQKNDLT. Over residues 92 to 106 the composition is skewed to basic and acidic residues; the sequence is IKKETNTDSHQEAKE. A compositionally biased stretch (low complexity) spans 109–126; that stretch reads TTSSTQQQQNNATTSTET. Basic and acidic residues predominate over residues 130–145; sequence NIEKENVKPSTDKTAT. Residues 158 to 205 are compositionally biased toward polar residues; sequence PNNTNNDVTTKPSTSEIQTTPTTPQESTNIENSQPQPTPSKVDNQVTD. The segment covering 216–241 has biased composition (basic and acidic residues); it reads SKEELKNNPEKLKELVRNDSNTDRST. CNA-B domains lie at 602–714, 715–824, and 825–935; these read LYKI…YKEP, KYNL…YKTP, and KYSL…EEDT. Residues 896–1124 form a disordered region; that stretch reads TQTGTNTTED…TGSENNGSNN (229 aa). Acidic residues-rich tracts occupy residues 903–913 and 930–1088; these read TEDDKDADGGE and YFEE…DSDS. The LPXTG sorting signal motif lies at 1112–1116; the sequence is LPETG. Thr1115 is subject to Pentaglycyl murein peptidoglycan amidated threonine. Residues 1116–1149 constitute a propeptide, removed by sortase; sequence GSENNGSNNATLFGGLFAALGSLLLFGRRKKQNK.

It belongs to the serine-aspartate repeat-containing protein (SDr) family.

The protein localises to the secreted. The protein resides in the cell wall. Functionally, specifically interacts with bone sialoprotein (BSP), a glycoprotein of bone and dentin extracellular matrix. Could contribute to staphylococcal osteomyelitis and arthritis. This is Bone sialoprotein-binding protein (bbp) from Staphylococcus aureus.